A 156-amino-acid chain; its full sequence is MDINITLIGQMITFAIFVGFTMKFVWPPLRKALEERREKIAEGLASADRASRELEVAKRQSAEILREAKAKATEIVENAYVRAHKVDEQAKEEAIAAADKIKSMAIAEIEQEKVKAKEQLKQELVNLAMAAASKIIAASVDEKASKKVLEDFVEKV.

The helical transmembrane segment at 5 to 27 (ITLIGQMITFAIFVGFTMKFVWP) threads the bilayer.

It belongs to the ATPase B chain family. In terms of assembly, F-type ATPases have 2 components, F(1) - the catalytic core - and F(0) - the membrane proton channel. F(1) has five subunits: alpha(3), beta(3), gamma(1), delta(1), epsilon(1). F(0) has three main subunits: a(1), b(2) and c(10-14). The alpha and beta chains form an alternating ring which encloses part of the gamma chain. F(1) is attached to F(0) by a central stalk formed by the gamma and epsilon chains, while a peripheral stalk is formed by the delta and b chains.

It is found in the cell inner membrane. Its function is as follows. F(1)F(0) ATP synthase produces ATP from ADP in the presence of a proton or sodium gradient. F-type ATPases consist of two structural domains, F(1) containing the extramembraneous catalytic core and F(0) containing the membrane proton channel, linked together by a central stalk and a peripheral stalk. During catalysis, ATP synthesis in the catalytic domain of F(1) is coupled via a rotary mechanism of the central stalk subunits to proton translocation. Component of the F(0) channel, it forms part of the peripheral stalk, linking F(1) to F(0). In Francisella tularensis subsp. tularensis (strain SCHU S4 / Schu 4), this protein is ATP synthase subunit b.